We begin with the raw amino-acid sequence, 233 residues long: 5'-methylthioadenosine/S-adenosylhomocysteine nucleosidase (233 aa).

Catalysis depends on glutamate 12, which acts as the Proton acceptor. Substrate is bound by residues glycine 78, isoleucine 156, and 177-178; that span reads ME. The Proton donor role is filled by aspartate 201.

Belongs to the PNP/UDP phosphorylase family. MtnN subfamily.

It catalyses the reaction S-adenosyl-L-homocysteine + H2O = S-(5-deoxy-D-ribos-5-yl)-L-homocysteine + adenine. The catalysed reaction is S-methyl-5'-thioadenosine + H2O = 5-(methylsulfanyl)-D-ribose + adenine. It carries out the reaction 5'-deoxyadenosine + H2O = 5-deoxy-D-ribose + adenine. It functions in the pathway amino-acid biosynthesis; L-methionine biosynthesis via salvage pathway; S-methyl-5-thio-alpha-D-ribose 1-phosphate from S-methyl-5'-thioadenosine (hydrolase route): step 1/2. Its function is as follows. Catalyzes the irreversible cleavage of the glycosidic bond in both 5'-methylthioadenosine (MTA) and S-adenosylhomocysteine (SAH/AdoHcy) to adenine and the corresponding thioribose, 5'-methylthioribose and S-ribosylhomocysteine, respectively. Also cleaves 5'-deoxyadenosine, a toxic by-product of radical S-adenosylmethionine (SAM) enzymes, into 5-deoxyribose and adenine. This chain is 5'-methylthioadenosine/S-adenosylhomocysteine nucleosidase, found in Listeria monocytogenes serotype 4b (strain F2365).